The chain runs to 118 residues: Thioredoxin AMT13 (118 aa).

Residues 1-110 (MSDNKAIQTL…LEDAIRANLG (110 aa)) form the Thioredoxin domain. An intrachain disulfide couples Cys-36 to Cys-39.

The protein belongs to the thioredoxin family.

It functions in the pathway mycotoxin biosynthesis. Thioredoxin; part of the gene clusters that mediate the biosynthesis of AM-toxins, host-selective toxins (HSTs) causing Alternaria blotch on apple, a worldwide distributed disease. AM-toxins are cyclic depsipeptides containing the 3 residues 2-hydroxy-isovaleric acid (2-HIV), dehydroalanine, L-alanine which are common for all 3 AM-toxins I to III. The fourth precursor is L-alpha-amino-methoxyphenyl-valeric acid (L-Amv) for AM-toxin I, L-alpha-amino-phenyl-valeric acid (L-Apv) for AM-toxin II, and L-alpha-amino-hydroxyphenyl-valeric acid (L-Ahv) for AM-toxin III. AM-toxins have two target sites for affecting susceptible apple cells; they cause invagination of the plasma membrane and electrolyte loss and chloroplast disorganization. The non-ribosomal peptide synthetase AMT1 contains 4 catalytic modules and is responsible for activation of each residue in AM-toxin. The aldo-keto reductase AMT2 catalyzes the conversion of 2-keto-isovaleric acid (2-KIV) to 2-hydroxy-isovaleric acid (2-HIV), one of the precursor residues incorporated by AMT1 during AM-toxin biosynthesis, by reduction of its ketone to an alcohol. The cytochrome P450 monooxygenase AMT3 and the thioesterase AMT4 are also important for AM-toxin production, but their exact function within the AM-toxin biosynthesis are not known yet. Up to 21 proteins (including AMT1 to AMT4) are predicted to be involved in AM-toxin biosynthesis since their expression ishighly up-regulated in AM-toxin-producing cultures. This Alternaria alternata (Alternaria rot fungus) protein is Thioredoxin AMT13.